The following is a 231-amino-acid chain: MKKLSMREMLQAGVHFGHQTRYWNPKMKPFIFGIRNKIHIINLDKTIVMFSNALVELKKIALAKGKILFVGTKRATRESIKSTALICGQFFVNYRWLGGMLTNWKTVRQSIKRLKDLENQSQDGTFDKLTKKEVLILNRELISLENSLGGIKNMGGLPDALFTAGAEQEHIAIKEANSLGIPVFSIVDTNSDPDGIDFIIPGNDDAIRAINLYLNIVSNVICSDELNKETH.

It belongs to the universal ribosomal protein uS2 family.

This Blochmanniella floridana protein is Small ribosomal subunit protein uS2.